The sequence spans 210 residues: Large ribosomal subunit protein bL25 (210 aa).

Belongs to the bacterial ribosomal protein bL25 family. CTC subfamily. In terms of assembly, part of the 50S ribosomal subunit; part of the 5S rRNA/L5/L18/L25 subcomplex. Contacts the 5S rRNA. Binds to the 5S rRNA independently of L5 and L18.

In terms of biological role, this is one of the proteins that binds to the 5S RNA in the ribosome where it forms part of the central protuberance. In Frankia casuarinae (strain DSM 45818 / CECT 9043 / HFP020203 / CcI3), this protein is Large ribosomal subunit protein bL25.